Here is a 272-residue protein sequence, read N- to C-terminus: Ribonuclease 3 (272 aa).

Positions 1-20 (MTDDVTNVEQPSTASEQQPQ) are enriched in polar residues. Positions 1-38 (MTDDVTNVEQPSTASEQQPQDVPAAEPSAAKKRRANKA) are disordered. The 128-residue stretch at 44 to 171 (AAAIEQRLGH…VIGAIYLDGG (128 aa)) folds into the RNase III domain. Residue E84 participates in Mg(2+) binding. D88 is a catalytic residue. 2 residues coordinate Mg(2+): D157 and E160. The active site involves E160. A DRBM domain is found at 196–265 (DPKTVLQEWA…ASAMLAREGV (70 aa)).

It belongs to the ribonuclease III family. In terms of assembly, homodimer. Mg(2+) is required as a cofactor.

It localises to the cytoplasm. The enzyme catalyses Endonucleolytic cleavage to 5'-phosphomonoester.. Its function is as follows. Digests double-stranded RNA. Involved in the processing of primary rRNA transcript to yield the immediate precursors to the large and small rRNAs (23S and 16S). Processes some mRNAs, and tRNAs when they are encoded in the rRNA operon. Processes pre-crRNA and tracrRNA of type II CRISPR loci if present in the organism. The protein is Ribonuclease 3 of Rhodopseudomonas palustris (strain ATCC BAA-98 / CGA009).